The following is a 591-amino-acid chain: Aspartate--tRNA(Asp/Asn) ligase (591 aa).

Glutamate 176 is a binding site for L-aspartate. Residues 200–203 (QLFK) are aspartate. An L-aspartate-binding site is contributed by arginine 222. Residues 222–224 (RDE) and glutamine 231 each bind ATP. Histidine 450 is a binding site for L-aspartate. Position 484 (glutamate 484) interacts with ATP. Arginine 491 lines the L-aspartate pocket. An ATP-binding site is contributed by 536 to 539 (GLDR).

It belongs to the class-II aminoacyl-tRNA synthetase family. Type 1 subfamily. Homodimer.

It localises to the cytoplasm. It catalyses the reaction tRNA(Asx) + L-aspartate + ATP = L-aspartyl-tRNA(Asx) + AMP + diphosphate. Aspartyl-tRNA synthetase with relaxed tRNA specificity since it is able to aspartylate not only its cognate tRNA(Asp) but also tRNA(Asn). Reaction proceeds in two steps: L-aspartate is first activated by ATP to form Asp-AMP and then transferred to the acceptor end of tRNA(Asp/Asn). The chain is Aspartate--tRNA(Asp/Asn) ligase from Bacillus cereus (strain AH187).